We begin with the raw amino-acid sequence, 177 residues long: Large ribosomal subunit protein uL6 (177 aa).

This sequence belongs to the universal ribosomal protein uL6 family. In terms of assembly, part of the 50S ribosomal subunit.

This protein binds to the 23S rRNA, and is important in its secondary structure. It is located near the subunit interface in the base of the L7/L12 stalk, and near the tRNA binding site of the peptidyltransferase center. The protein is Large ribosomal subunit protein uL6 of Pseudomonas putida (strain W619).